Consider the following 752-residue polypeptide: Polyribonucleotide nucleotidyltransferase (752 aa).

The Mg(2+) site is built by Asp529 and Asp535. Positions 595–654 (PRVTTIKVPVDKIGEVIGPKGKVINAITEETGAQISIEDDGTVFVGATDGPSAQAAIDKI) constitute a KH domain. The S1 motif domain maps to 666 to 735 (GERFLGTVVK…KRGKISLILV (70 aa)).

The protein belongs to the polyribonucleotide nucleotidyltransferase family. Mg(2+) serves as cofactor.

The protein resides in the cytoplasm. It catalyses the reaction RNA(n+1) + phosphate = RNA(n) + a ribonucleoside 5'-diphosphate. Involved in mRNA degradation. Catalyzes the phosphorolysis of single-stranded polyribonucleotides processively in the 3'- to 5'-direction. In Mycobacterium tuberculosis (strain ATCC 25177 / H37Ra), this protein is Polyribonucleotide nucleotidyltransferase.